Here is a 243-residue protein sequence, read N- to C-terminus: 6-carboxyhexanoate--CoA ligase (243 aa).

It belongs to the BioW family. In terms of assembly, homodimer. Mg(2+) serves as cofactor.

The catalysed reaction is heptanedioate + ATP + CoA = 6-carboxyhexanoyl-CoA + AMP + diphosphate. It participates in metabolic intermediate metabolism; pimeloyl-CoA biosynthesis; pimeloyl-CoA from pimelate: step 1/1. In terms of biological role, catalyzes the transformation of pimelate into pimeloyl-CoA with concomitant hydrolysis of ATP to AMP. In Corynebacterium pseudotuberculosis (strain FRC41), this protein is 6-carboxyhexanoate--CoA ligase.